We begin with the raw amino-acid sequence, 200 residues long: Ribonuclease T2 (200 aa).

The cysteines at positions 17 and 22 are disulfide-linked. H32 is a catalytic residue. C42 and C89 are oxidised to a cystine. N43 and N73 each carry an N-linked (GlcNAc...) asparagine glycan. Catalysis depends on residues E82 and H86. N116 is a glycosylation site (N-linked (GlcNAc...) asparagine). 2 disulfides stabilise this stretch: C152–C188 and C170–C180.

The protein belongs to the RNase T2 family.

The protein resides in the secreted. It localises to the lysosome lumen. Its subcellular location is the endoplasmic reticulum lumen. The protein localises to the mitochondrion intermembrane space. It carries out the reaction a ribonucleotidyl-ribonucleotide-RNA + H2O = a 3'-end 3'-phospho-ribonucleotide-RNA + a 5'-end dephospho-ribonucleoside-RNA + H(+). It catalyses the reaction an adenylyl-uridine-RNA = a 3'-end 2',3'-cyclophospho-AMP-RNA + a 5'-end dephospho-uridine-RNA. The enzyme catalyses a guanylyl-uridine-RNA = a 3'-end 2',3'-cyclophospho-GMP-RNA + a 5'-end dephospho-uridine-RNA. Its activity is regulated as follows. Inhibited by Zn(2+) and Cu(2+). Ribonuclease that plays an essential role in innate immune response by recognizing and degrading RNAs from microbial pathogens that are subsequently sensed by TLR8. Cleaves preferentially single-stranded RNA molecules between purine and uridine residues, which critically contributes to the supply of catabolic uridine and the generation of purine-2',3'-cyclophosphate-terminated oligoribonucleotides. In turn, RNase T2 degradation products promote the RNA-dependent activation of TLR8. In plasmacytoid dendritic cells, it cooperates with PLD3 or PLD4 5'-&gt;3' exonucleases to process RNA fragments and release 2',3'-cyclic guanosine monophosphate (2',3'-cGMP), a potent stimulatory ligand for TLR7. Also plays a key role in degradation of mitochondrial RNA and processing of non-coding RNA imported from the cytosol into mitochondria. Participates as well in degradation of mitochondrion-associated cytosolic rRNAs. In Sus scrofa (Pig), this protein is Ribonuclease T2 (RNASET2).